The chain runs to 531 residues: Jacalin-related lectin 16 (531 aa).

4 consecutive Jacalin-type lectin domains span residues 1-87, 90-232, 235-378, and 385-528; these read MDRS…YFTW, PTKM…YFTT, LISL…YFRP, and TEKV…NVLP.

Belongs to the jacalin lectin family.

The protein is Jacalin-related lectin 16 (JAL16) of Arabidopsis thaliana (Mouse-ear cress).